A 138-amino-acid polypeptide reads, in one-letter code: Putative nickel-responsive regulator (138 aa).

His78, His89, His91, and Cys97 together coordinate Ni(2+).

Belongs to the transcriptional regulatory CopG/NikR family. It depends on Ni(2+) as a cofactor.

Functionally, transcriptional regulator. The protein is Putative nickel-responsive regulator of Thermococcus kodakarensis (strain ATCC BAA-918 / JCM 12380 / KOD1) (Pyrococcus kodakaraensis (strain KOD1)).